A 254-amino-acid polypeptide reads, in one-letter code: MKKHLLTLTLSSILAIPVVSHAEFKGGFADIGVHYLDWTSRTTEKSSTKSHKDDFGYLEFEGGANFSWGEMYGFFDWENFYNGRHNKPGSEQRYTFKNTNRIYLGDTGFNLYLHAYGTYGSANRVNFHDDMFLYGIGYNFTGSGWWFKPFFAKRYTDQTYYTGDNGYVAGWVAGYNFMLGSEKFTLTNWNEYEFDRDATYAAGNGGKEGLNGAVALWWNATSHITTGIQYRYADDKLGEDFYQDAIIYSIKFNF.

It belongs to the nucleoside-specific channel-forming outer membrane porin (Tsx) (TC 1.B.10) family.

This is an uncharacterized protein from Escherichia coli (strain K12).